The following is a 1404-amino-acid chain: DNA-directed RNA polymerase subunit beta' (1404 aa).

4 residues coordinate Zn(2+): Cys-70, Cys-72, Cys-85, and Cys-88. Residues Asp-460, Asp-462, and Asp-464 each contribute to the Mg(2+) site. Positions 814, 888, 895, and 898 each coordinate Zn(2+).

Belongs to the RNA polymerase beta' chain family. In terms of assembly, the RNAP catalytic core consists of 2 alpha, 1 beta, 1 beta' and 1 omega subunit. When a sigma factor is associated with the core the holoenzyme is formed, which can initiate transcription. It depends on Mg(2+) as a cofactor. Zn(2+) is required as a cofactor.

The enzyme catalyses RNA(n) + a ribonucleoside 5'-triphosphate = RNA(n+1) + diphosphate. In terms of biological role, DNA-dependent RNA polymerase catalyzes the transcription of DNA into RNA using the four ribonucleoside triphosphates as substrates. The protein is DNA-directed RNA polymerase subunit beta' of Buchnera aphidicola subsp. Baizongia pistaciae (strain Bp).